A 231-amino-acid polypeptide reads, in one-letter code: NADH-ubiquinone oxidoreductase chain 4 (231 aa).

6 helical membrane-spanning segments follow: residues 1 to 21 (PIAG…YGII), 34 to 54 (MFLP…LTCL), 63 to 85 (IAYS…TPWG), 89 to 111 (AMAL…NTTY), 128 to 148 (ILPM…ATPP), and 156 to 176 (LLIM…LGLS).

This sequence belongs to the complex I subunit 4 family.

It is found in the mitochondrion membrane. The catalysed reaction is a ubiquinone + NADH + 5 H(+)(in) = a ubiquinol + NAD(+) + 4 H(+)(out). In terms of biological role, core subunit of the mitochondrial membrane respiratory chain NADH dehydrogenase (Complex I) that is believed to belong to the minimal assembly required for catalysis. Complex I functions in the transfer of electrons from NADH to the respiratory chain. The immediate electron acceptor for the enzyme is believed to be ubiquinone. The chain is NADH-ubiquinone oxidoreductase chain 4 (MT-ND4) from Bothriechis lateralis (Side-striped palm pitviper).